We begin with the raw amino-acid sequence, 211 residues long: Thiamine-phosphate synthase (211 aa).

Residues 37–41 (QLRIK) and asparagine 69 contribute to the 4-amino-2-methyl-5-(diphosphooxymethyl)pyrimidine site. Aspartate 70 and aspartate 89 together coordinate Mg(2+). Serine 108 is a 4-amino-2-methyl-5-(diphosphooxymethyl)pyrimidine binding site. Position 134–136 (134–136 (TQT)) interacts with 2-[(2R,5Z)-2-carboxy-4-methylthiazol-5(2H)-ylidene]ethyl phosphate. Lysine 137 contacts 4-amino-2-methyl-5-(diphosphooxymethyl)pyrimidine. 2-[(2R,5Z)-2-carboxy-4-methylthiazol-5(2H)-ylidene]ethyl phosphate contacts are provided by residues glycine 166 and 186-187 (VS).

This sequence belongs to the thiamine-phosphate synthase family. Mg(2+) is required as a cofactor.

The enzyme catalyses 2-[(2R,5Z)-2-carboxy-4-methylthiazol-5(2H)-ylidene]ethyl phosphate + 4-amino-2-methyl-5-(diphosphooxymethyl)pyrimidine + 2 H(+) = thiamine phosphate + CO2 + diphosphate. It carries out the reaction 2-(2-carboxy-4-methylthiazol-5-yl)ethyl phosphate + 4-amino-2-methyl-5-(diphosphooxymethyl)pyrimidine + 2 H(+) = thiamine phosphate + CO2 + diphosphate. The catalysed reaction is 4-methyl-5-(2-phosphooxyethyl)-thiazole + 4-amino-2-methyl-5-(diphosphooxymethyl)pyrimidine + H(+) = thiamine phosphate + diphosphate. The protein operates within cofactor biosynthesis; thiamine diphosphate biosynthesis; thiamine phosphate from 4-amino-2-methyl-5-diphosphomethylpyrimidine and 4-methyl-5-(2-phosphoethyl)-thiazole: step 1/1. Condenses 4-methyl-5-(beta-hydroxyethyl)thiazole monophosphate (THZ-P) and 2-methyl-4-amino-5-hydroxymethyl pyrimidine pyrophosphate (HMP-PP) to form thiamine monophosphate (TMP). This is Thiamine-phosphate synthase from Escherichia coli O1:K1 / APEC.